We begin with the raw amino-acid sequence, 141 residues long: Large ribosomal subunit protein uL11 (141 aa).

It belongs to the universal ribosomal protein uL11 family. As to quaternary structure, part of the ribosomal stalk of the 50S ribosomal subunit. Interacts with L10 and the large rRNA to form the base of the stalk. L10 forms an elongated spine to which L12 dimers bind in a sequential fashion forming a multimeric L10(L12)X complex. Post-translationally, one or more lysine residues are methylated.

Functionally, forms part of the ribosomal stalk which helps the ribosome interact with GTP-bound translation factors. The polypeptide is Large ribosomal subunit protein uL11 (Nitratiruptor sp. (strain SB155-2)).